The primary structure comprises 362 residues: DNA replication and repair protein RecF (362 aa).

31-38 (GDNAAGKT) provides a ligand contact to ATP.

Belongs to the RecF family.

Its subcellular location is the cytoplasm. In terms of biological role, the RecF protein is involved in DNA metabolism; it is required for DNA replication and normal SOS inducibility. RecF binds preferentially to single-stranded, linear DNA. It also seems to bind ATP. This chain is DNA replication and repair protein RecF, found in Hydrogenovibrio crunogenus (strain DSM 25203 / XCL-2) (Thiomicrospira crunogena).